A 504-amino-acid chain; its full sequence is ATP synthase subunit alpha, chloroplastic (504 aa).

Residue 170 to 177 (GDRQTGKT) participates in ATP binding.

The protein belongs to the ATPase alpha/beta chains family. As to quaternary structure, F-type ATPases have 2 components, CF(1) - the catalytic core - and CF(0) - the membrane proton channel. CF(1) has five subunits: alpha(3), beta(3), gamma(1), delta(1), epsilon(1). CF(0) has four main subunits: a, b, b' and c.

It localises to the plastid. It is found in the chloroplast thylakoid membrane. It catalyses the reaction ATP + H2O + 4 H(+)(in) = ADP + phosphate + 5 H(+)(out). In terms of biological role, produces ATP from ADP in the presence of a proton gradient across the membrane. The alpha chain is a regulatory subunit. The sequence is that of ATP synthase subunit alpha, chloroplastic from Cyanidium caldarium (Red alga).